We begin with the raw amino-acid sequence, 837 residues long: Protein translocase subunit SecA (837 aa).

Residues Gln-87, 105 to 109, and Asp-494 contribute to the ATP site; that span reads GEGKT. Positions 788–837 are disordered; the sequence is HKESKSDLEYSDSENTETKKKPKRRSEPKVGRNDPCPCGSGKKYKKCCGK. Positions 823, 825, 834, and 835 each coordinate Zn(2+).

Belongs to the SecA family. Monomer and homodimer. Part of the essential Sec protein translocation apparatus which comprises SecA, SecYEG and auxiliary proteins SecDF-YajC and YidC. Zn(2+) is required as a cofactor.

The protein localises to the cell inner membrane. It is found in the cytoplasm. The catalysed reaction is ATP + H2O + cellular proteinSide 1 = ADP + phosphate + cellular proteinSide 2.. Part of the Sec protein translocase complex. Interacts with the SecYEG preprotein conducting channel. Has a central role in coupling the hydrolysis of ATP to the transfer of proteins into and across the cell membrane, serving as an ATP-driven molecular motor driving the stepwise translocation of polypeptide chains across the membrane. The sequence is that of Protein translocase subunit SecA from Maridesulfovibrio salexigens (strain ATCC 14822 / DSM 2638 / NCIMB 8403 / VKM B-1763) (Desulfovibrio salexigens).